The sequence spans 140 residues: Lipoprotein MlpG (140 aa).

An N-terminal signal peptide occupies residues Met1–Gly17. Cys18 carries N-palmitoyl cysteine lipidation. Cys18 is lipidated: S-diacylglycerol cysteine. Positions Asp22–Glu57 are disordered. Over residues Lys33 to Glu57 the composition is skewed to basic and acidic residues.

This sequence belongs to the Multicopy lipoprotein (Mlp) family.

Its subcellular location is the cell outer membrane. Functionally, an outer membrane protein that may participate in pathogenesis. Some human Lyme disease patients have antibodies against this protein. The Mlp proteins probably undergo intragenic recombination, generating new alleles. This is Lipoprotein MlpG from Borreliella burgdorferi (strain ATCC 35210 / DSM 4680 / CIP 102532 / B31) (Borrelia burgdorferi).